We begin with the raw amino-acid sequence, 1268 residues long: Truncated polyprotein 1aTF (1268 aa).

The C4-type; atypical zinc finger occupies 8–28; that stretch reads CMCTPAARVFWNAGQVFCTRC. Residues 69-180 enclose the Peptidase C31 domain; sequence ECTPSGCCWL…QPFCPFEEAH (112 aa). Residues 69–182 are PCP1-alpha; sequence ECTPSGCCWL…FCPFEEAHSD (114 aa). Residues cysteine 76 and histidine 146 each act as for Nsp1-alpha papain-like cysteine proteinase activity in the active site. The tract at residues 269–384 is PCP1-beta; that stretch reads PNVFDGKCWL…IFRFGAHKWY (116 aa). Residues 269–385 form the Peptidase C32 domain; it reads PNVFDGKCWL…FRFGAHKWYG (117 aa). Active-site for Nsp1-beta papain-like cysteine proteinase activity residues include cysteine 276 and histidine 345. Positions 420–527 constitute a Peptidase C33 domain; the sequence is TYSPPTDGSC…VGVCSEGCVA (108 aa). Active-site for Nsp2 cysteine proteinase activity residues include cysteine 429 and histidine 498. 2 disordered regions span residues 728 to 758 and 1027 to 1064; these read AIGS…SHPA and SVTP…SHAS. Residues 737-749 show a composition bias toward basic and acidic residues; it reads DSKRENMHNSRED. Helical transmembrane passes span 1119-1139, 1153-1173, 1194-1214, and 1233-1253; these read LWLQ…CSVV, FLVL…LLLY, VMLS…AALW, and VISG…FLLF.

The protein localises to the host nucleus. It is found in the host cytoplasm. The protein resides in the host endoplasmic reticulum membrane. It localises to the membrane. Is essential for viral subgenomic mRNA synthesis. Functionally, inhibits IFN-beta production. Counteracts the action of NF-kappaB by decreasing the phosphorylation of IkappaB-alpha, such that the degradation of IkappaB-alpha is suppressed. This leads to the blockage of NF-kappaB nuclear translocation and thus interference of NF-kappaB activation. Also seems to inhibit IRF3-dependent pathways. In terms of biological role, nsp1-beta transactivates the programmed ribosomal frameshifting event leading to the expression of the 1aTF polyprotein. In Porcine reproductive and respiratory syndrome virus (isolate Pig/United States/SD 01-08/2001) (PRRSV), this protein is Truncated polyprotein 1aTF.